We begin with the raw amino-acid sequence, 453 residues long: Nuclear hormone receptor family member nhr-12 (453 aa).

The interval 1 to 37 (MEQIPQEQKTEPFLASFTTTEKLGTETPTTSITPNTQ) is disordered. Positions 18–36 (TTTEKLGTETPTTSITPNT) are enriched in low complexity. Positions 44-119 (KPNCAVCNEV…VGMNPECVQN (76 aa)) form a DNA-binding region, nuclear receptor. NR C4-type zinc fingers lie at residues 47 to 67 (CAVC…CRAC) and 83 to 107 (CRAG…YDKC). Residues 178–451 (FSPASLPGLS…ENFVNIINGK (274 aa)) form the NR LBD domain.

It belongs to the nuclear hormone receptor family.

It is found in the nucleus. Functionally, orphan nuclear receptor. The polypeptide is Nuclear hormone receptor family member nhr-12 (nhr-12) (Caenorhabditis elegans).